We begin with the raw amino-acid sequence, 394 residues long: Argininosuccinate synthase (394 aa).

8–16 (AYSGGLDTS) serves as a coordination point for ATP. The L-citrulline site is built by Tyr-86 and Ser-91. An ATP-binding site is contributed by Gly-116. Residues Thr-118, Asn-122, and Asp-123 each contribute to the L-aspartate site. Position 122 (Asn-122) interacts with L-citrulline. L-citrulline-binding residues include Arg-126, Ser-172, Ser-181, Glu-256, and Tyr-268.

Belongs to the argininosuccinate synthase family. Type 1 subfamily. As to quaternary structure, homotetramer.

Its subcellular location is the cytoplasm. The enzyme catalyses L-citrulline + L-aspartate + ATP = 2-(N(omega)-L-arginino)succinate + AMP + diphosphate + H(+). It participates in amino-acid biosynthesis; L-arginine biosynthesis; L-arginine from L-ornithine and carbamoyl phosphate: step 2/3. In Methanococcoides burtonii (strain DSM 6242 / NBRC 107633 / OCM 468 / ACE-M), this protein is Argininosuccinate synthase.